A 306-amino-acid chain; its full sequence is Erythromycin 3''-O-methyltransferase (306 aa).

Leu-157 and His-162 together coordinate S-adenosyl-L-methionine.

It belongs to the methyltransferase superfamily.

It catalyses the reaction erythromycin C + S-adenosyl-L-methionine = erythromycin A + S-adenosyl-L-homocysteine + H(+). The enzyme catalyses erythromycin D + S-adenosyl-L-methionine = erythromycin B + S-adenosyl-L-homocysteine + H(+). It participates in antibiotic biosynthesis; erythromycin biosynthesis. Functionally, S-adenosyl-L-methionine-dependent O-methyltransferase that catalyzes the last step in the erythromycin biosynthesis pathway. Methylates the position 3 of the mycarosyl moiety of erythromycin C, forming the most active form of the antibiotic, erythromycin A. Can also methylate the precursor erythromycin D, forming erythromycin B. In Saccharopolyspora erythraea (strain ATCC 11635 / DSM 40517 / JCM 4748 / NBRC 13426 / NCIMB 8594 / NRRL 2338), this protein is Erythromycin 3''-O-methyltransferase (eryG).